A 707-amino-acid polypeptide reads, in one-letter code: Nucleolin (707 aa).

The disordered stretch occupies residues methionine 1–proline 308. N6-acetyllysine is present on residues lysine 9, lysine 15, and lysine 16. The span at valine 24–valine 46 shows a compositional bias: acidic residues. Phosphoserine occurs at positions 28, 34, 40, and 41. Residues alanine 56–threonine 92 show a composition bias toward low complexity. Repeat 1 spans residues threonine 58–valine 65. Residues threonine 58–lysine 135 form an 8 X 8 AA tandem repeats of X-T-P-X-K-K-X-X region. Residue serine 67 is modified to Phosphoserine. 4 positions are modified to phosphothreonine: threonine 69, threonine 76, threonine 84, and threonine 92. Tandem repeats lie at residues proline 75 to alanine 82, valine 83 to valine 90, and alanine 91 to isoleucine 98. Lysine 96 is modified (N6-acetyllysine). At threonine 99 the chain carries Phosphothreonine. A 5; truncated repeat occupies threonine 99–isoleucine 104. Position 102 is an N6-acetyllysine (lysine 102). Residues proline 105–alanine 112 form repeat 6. Threonine 106 is subject to Phosphothreonine. An N6-acetyllysine mark is found at lysine 109 and lysine 116. Tandem repeats lie at residues proline 120–alanine 127 and alanine 128–lysine 135. Residue threonine 121 is modified to Phosphothreonine. Residues threonine 121–glycine 137 are compositionally biased toward low complexity. Lysine 124 is subject to N6-acetyllysine. A phosphoserine mark is found at serine 145 and serine 157. Over residues serine 145–glutamate 170 the composition is skewed to acidic residues. Low complexity predominate over residues proline 179–alanine 188. Serine 189 and serine 212 each carry phosphoserine. The span at serine 189–methionine 217 shows a compositional bias: acidic residues. Phosphothreonine is present on threonine 220. The span at glutamate 241 to glutamate 273 shows a compositional bias: acidic residues. Residues methionine 286 to glycine 302 are compositionally biased toward basic and acidic residues. A Glycyl lysine isopeptide (Lys-Gly) (interchain with G-Cter in SUMO1); alternate cross-link involves residue lysine 299. Lysine 299 is covalently cross-linked (Glycyl lysine isopeptide (Lys-Gly) (interchain with G-Cter in SUMO2); alternate). Serine 303 is subject to Phosphoserine. RRM domains lie at phenylalanine 309–glycine 385 and arginine 395–glutamate 468. N6-acetyllysine is present on lysine 320. Lysine 326 participates in a covalent cross-link: Glycyl lysine isopeptide (Lys-Gly) (interchain with G-Cter in SUMO1); alternate. Residue lysine 326 forms a Glycyl lysine isopeptide (Lys-Gly) (interchain with G-Cter in SUMO2); alternate linkage. At lysine 350 the chain carries N6-acetyllysine. Residue serine 358 is modified to Phosphoserine. Residue threonine 369 is modified to Phosphothreonine. Residue lysine 372 forms a Glycyl lysine isopeptide (Lys-Gly) (interchain with G-Cter in SUMO2) linkage. Residue lysine 379 forms a Glycyl lysine isopeptide (Lys-Gly) (interchain with G-Cter in SUMO2); alternate linkage. Lysine 379 bears the N6-acetyllysine; alternate mark. Lysine 400 carries the post-translational modification N6-acetyllysine. At serine 403 the chain carries Phosphoserine. Threonine 407 is modified (phosphothreonine). Lysine 429 and lysine 446 each carry N6-acetyllysine. Phosphoserine occurs at positions 460 and 462. An N6-acetyllysine mark is found at lysine 469 and lysine 478. 2 consecutive RRM domains span residues lysine 487–serine 561 and lysine 569–proline 644. Residue lysine 514 forms a Glycyl lysine isopeptide (Lys-Gly) (interchain with G-Cter in SUMO2); alternate linkage. At lysine 514 the chain carries N6-acetyllysine; alternate. Residues lysine 522 and lysine 569 each carry the N6-acetyllysine modification. Lysine 574 is covalently cross-linked (Glycyl lysine isopeptide (Lys-Gly) (interchain with G-Cter in SUMO2); alternate). Lysine 574 bears the N6-acetyllysine; alternate mark. Serine 577 bears the Phosphoserine mark. Residue lysine 586 forms a Glycyl lysine isopeptide (Lys-Gly) (interchain with G-Cter in SUMO1); alternate linkage. A Glycyl lysine isopeptide (Lys-Gly) (interchain with G-Cter in SUMO2); alternate cross-link involves residue lysine 586. Serine 588 and serine 616 each carry phosphoserine. Lysine 621 participates in a covalent cross-link: Glycyl lysine isopeptide (Lys-Gly) (interchain with G-Cter in SUMO2). The interval leucine 639–glutamate 707 is disordered. N6-acetyllysine is present on lysine 643. Residues glutamate 647–aspartate 696 are compositionally biased toward gly residues. Residues arginine 653, arginine 657, arginine 663, arginine 667, arginine 670, arginine 676, arginine 678, arginine 684, and arginine 688 each carry the asymmetric dimethylarginine modification. An Asymmetric dimethylarginine; alternate modification is found at arginine 691. Arginine 691 bears the Omega-N-methylarginine; alternate mark.

Identified in a IGF2BP1-dependent mRNP granule complex containing untranslated mRNAs. Component of the SWAP complex that consists of NPM1, NCL/nucleolin, PARP1 and SWAP70. Component of a complex which is at least composed of HTATSF1/Tat-SF1, the P-TEFb complex components CDK9 and CCNT1, RNA polymerase II, SUPT5H, and NCL/nucleolin. Interacts with AICDA. Interacts with APTX. Interacts with C1QBP. Interacts with ERBB4. Interacts (via C-terminus) with FMR1 isoform 6 (via N-terminus). Interacts with GZF1; this interaction is important for nucleolar localization of GZF1. Interacts with NSUN2. Interacts with NVL. Interacts (via N-terminus domain) with SETX. Interacts (via RRM1 and C-terminal RRM4/Arg/Gly-rich domains) with TERT; the interaction is important for nucleolar localization of TERT. Interacts with WDR46. Interacts with ZFP36. Interacts with LRRC34. Interacts with RRP1B. Interacts with HNRNPU; this interaction occurs during mitosis. Interacts with RIOK1; RIOK1 recruits NCL to PRMT5 for symmetrically methylation. Interacts with ZBTB7B. Interacts with MDK; this interaction promotes NCL clustering and lateral movements of this complex into lipid rafts leading to MDK internalization. Interacts with HDGF. Interacts with ALKBH2. Interacts with IGFBP5; this interaction is necessary for IGFBP5 localization to the nucleus. Interacts with DDX24 (when ubiquitinated); this interaction may be important during ribosome biogenesis. Post-translationally, some glutamate residues are glycylated by TTLL8. This modification occurs exclusively on glutamate residues and results in a glycine chain on the gamma-carboxyl group. Symmetrically methylated by PRMT5. In terms of tissue distribution, expressed in B-cells that have been induced to switch to various Ig isotypes.

It localises to the nucleus. The protein resides in the nucleolus. It is found in the cytoplasm. Nucleolin is the major nucleolar protein of growing eukaryotic cells. It is found associated with intranucleolar chromatin and pre-ribosomal particles. It induces chromatin decondensation by binding to histone H1. It is thought to play a role in pre-rRNA transcription and ribosome assembly. May play a role in the process of transcriptional elongation. Binds RNA oligonucleotides with 5'-UUAGGG-3' repeats more tightly than the telomeric single-stranded DNA 5'-TTAGGG-3' repeats. The sequence is that of Nucleolin (Ncl) from Mus musculus (Mouse).